The sequence spans 252 residues: Uridylate kinase (252 aa).

An ATP-binding site is contributed by 20 to 23 (KLSG). The interval 28-33 (GGGGLG) is involved in allosteric activation by GTP. UMP is bound at residue G62. ATP contacts are provided by G63 and R67. Residues D82 and 143–150 (MGMPYFST) each bind UMP. Positions 171, 177, and 180 each coordinate ATP.

The protein belongs to the UMP kinase family. In terms of assembly, homohexamer.

Its subcellular location is the cytoplasm. The enzyme catalyses UMP + ATP = UDP + ADP. It functions in the pathway pyrimidine metabolism; CTP biosynthesis via de novo pathway; UDP from UMP (UMPK route): step 1/1. Allosterically activated by GTP. Inhibited by UTP. Its function is as follows. Catalyzes the reversible phosphorylation of UMP to UDP. This Streptomyces avermitilis (strain ATCC 31267 / DSM 46492 / JCM 5070 / NBRC 14893 / NCIMB 12804 / NRRL 8165 / MA-4680) protein is Uridylate kinase.